The primary structure comprises 340 residues: Ketol-acid reductoisomerase (NADP(+)) (340 aa).

Residues 1 to 182 (MRVYYDRDCD…GGGRSGIIET (182 aa)) form the KARI N-terminal Rossmann domain. NADP(+) is bound by residues 24 to 27 (YGSQ), Arg48, Ser51, Ser53, and 83 to 86 (DELQ). His108 is an active-site residue. Residue Gly134 participates in NADP(+) binding. Residues 183–329 (NFRQECETDL…EKLRGMMPWI (147 aa)) enclose the KARI C-terminal knotted domain. The Mg(2+) site is built by Asp191, Glu195, Glu227, and Glu231. Ser252 serves as a coordination point for substrate.

Belongs to the ketol-acid reductoisomerase family. The cofactor is Mg(2+).

It catalyses the reaction (2R)-2,3-dihydroxy-3-methylbutanoate + NADP(+) = (2S)-2-acetolactate + NADPH + H(+). The catalysed reaction is (2R,3R)-2,3-dihydroxy-3-methylpentanoate + NADP(+) = (S)-2-ethyl-2-hydroxy-3-oxobutanoate + NADPH + H(+). It participates in amino-acid biosynthesis; L-isoleucine biosynthesis; L-isoleucine from 2-oxobutanoate: step 2/4. The protein operates within amino-acid biosynthesis; L-valine biosynthesis; L-valine from pyruvate: step 2/4. In terms of biological role, involved in the biosynthesis of branched-chain amino acids (BCAA). Catalyzes an alkyl-migration followed by a ketol-acid reduction of (S)-2-acetolactate (S2AL) to yield (R)-2,3-dihydroxy-isovalerate. In the isomerase reaction, S2AL is rearranged via a Mg-dependent methyl migration to produce 3-hydroxy-3-methyl-2-ketobutyrate (HMKB). In the reductase reaction, this 2-ketoacid undergoes a metal-dependent reduction by NADPH to yield (R)-2,3-dihydroxy-isovalerate. The sequence is that of Ketol-acid reductoisomerase (NADP(+)) from Cereibacter sphaeroides (strain ATCC 17029 / ATH 2.4.9) (Rhodobacter sphaeroides).